Here is a 456-residue protein sequence, read N- to C-terminus: ATP synthase subunit beta 1 (456 aa).

152–159 (GGAGVGKS) contributes to the ATP binding site.

Belongs to the ATPase alpha/beta chains family. As to quaternary structure, F-type ATPases have 2 components, CF(1) - the catalytic core - and CF(0) - the membrane proton channel. CF(1) has five subunits: alpha(3), beta(3), gamma(1), delta(1), epsilon(1). CF(0) has three main subunits: a(1), b(2) and c(9-12). The alpha and beta chains form an alternating ring which encloses part of the gamma chain. CF(1) is attached to CF(0) by a central stalk formed by the gamma and epsilon chains, while a peripheral stalk is formed by the delta and b chains.

It is found in the cell membrane. It carries out the reaction ATP + H2O + 4 H(+)(in) = ADP + phosphate + 5 H(+)(out). In terms of biological role, produces ATP from ADP in the presence of a proton gradient across the membrane. The catalytic sites are hosted primarily by the beta subunits. The protein is ATP synthase subunit beta 1 of Listeria welshimeri serovar 6b (strain ATCC 35897 / DSM 20650 / CCUG 15529 / CIP 8149 / NCTC 11857 / SLCC 5334 / V8).